The primary structure comprises 1040 residues: Alpha-mannosidase 2C1 (1040 aa).

Co(2+) contacts are provided by H260, D262, D372, and H577. D372 functions as the Nucleophile in the catalytic mechanism.

Belongs to the glycosyl hydrolase 38 family. The cofactor is Co(2+).

It is found in the cytoplasm. It catalyses the reaction Hydrolysis of terminal, non-reducing alpha-D-mannose residues in alpha-D-mannosides.. With respect to regulation, strongly inhibited by swainsonine. Also inhibited to a lesser extent by deoxymannojirimycin (DMM). Its function is as follows. Cleaves alpha 1,2-, alpha 1,3-, and alpha 1,6-linked mannose residues on cytoplasmic free oligosaccharides generated by N-glycoprotein degradation pathways. This chain is Alpha-mannosidase 2C1 (MAN2C1), found in Homo sapiens (Human).